A 207-amino-acid polypeptide reads, in one-letter code: ATP-dependent Clp protease proteolytic subunit (207 aa).

Serine 111 functions as the Nucleophile in the catalytic mechanism. The active site involves histidine 136.

The protein belongs to the peptidase S14 family. As to quaternary structure, fourteen ClpP subunits assemble into 2 heptameric rings which stack back to back to give a disk-like structure with a central cavity, resembling the structure of eukaryotic proteasomes. Component of the ClpAP and ClpXP complexes.

The protein localises to the cytoplasm. It catalyses the reaction Hydrolysis of proteins to small peptides in the presence of ATP and magnesium. alpha-casein is the usual test substrate. In the absence of ATP, only oligopeptides shorter than five residues are hydrolyzed (such as succinyl-Leu-Tyr-|-NHMec, and Leu-Tyr-Leu-|-Tyr-Trp, in which cleavage of the -Tyr-|-Leu- and -Tyr-|-Trp bonds also occurs).. Its function is as follows. Cleaves peptides in various proteins in a process that requires ATP hydrolysis. Has a chymotrypsin-like activity. Plays a major role in the degradation of misfolded proteins. The protein is ATP-dependent Clp protease proteolytic subunit of Salmonella enteritidis PT4 (strain P125109).